Consider the following 303-residue polypeptide: CDAN1-interacting nuclease 1 (303 aa).

The protein localises to the nucleus. Its subcellular location is the cytoplasm. In terms of biological role, may play a role in erythroid cell differentiation. This is CDAN1-interacting nuclease 1 (cdin1) from Xenopus tropicalis (Western clawed frog).